The following is a 132-amino-acid chain: Small ribosomal subunit protein uS8 (132 aa).

Belongs to the universal ribosomal protein uS8 family. In terms of assembly, part of the 30S ribosomal subunit. Contacts proteins S5 and S12.

One of the primary rRNA binding proteins, it binds directly to 16S rRNA central domain where it helps coordinate assembly of the platform of the 30S subunit. This is Small ribosomal subunit protein uS8 from Coprothermobacter proteolyticus (strain ATCC 35245 / DSM 5265 / OCM 4 / BT).